We begin with the raw amino-acid sequence, 183 residues long: Oligoribonuclease (183 aa).

The Exonuclease domain occupies 8 to 171; it reads LIWIDLEMTG…DDIRDSIHEL (164 aa). The active site involves tyrosine 129.

The protein belongs to the oligoribonuclease family.

Its subcellular location is the cytoplasm. Functionally, 3'-to-5' exoribonuclease specific for small oligoribonucleotides. The chain is Oligoribonuclease from Halorhodospira halophila (strain DSM 244 / SL1) (Ectothiorhodospira halophila (strain DSM 244 / SL1)).